A 246-amino-acid chain; its full sequence is MACVKGSNAEKTNAIIMAAGLGTRMAPLTKTTPKPLISVNGTPMIETVINALVTAGVERISVVVGYLKEQFCYLEERYPAVVLVENTEYLEKNNISSIYAAVDVLEQGATFICEADLVISDEHIFQPRPSRSCYFGRKFSGHTGDWVFDLDDSGKIVRIGKGGSDTYAMVGLSYFSAPDAKRLARFMHDAYKETGHEQLFWDDVVNNHIAELDLSIHPVEAQQIAELDSVAELAAFDHGYVYLLRS.

Positions 19, 20, 34, 97, 114, and 115 each coordinate CMP-(2-aminoethyl)phosphonate. Mg(2+) is bound by residues Asp116 and Asp145. 3 residues coordinate CMP-(2-aminoethyl)phosphonate: Asp145, Lys161, and Asp202. Residues Glu226 and Asp228 each coordinate Mg(2+).

It belongs to the LicC/PntC cytidylyltransferase family. As to quaternary structure, monomer. It depends on Mg(2+) as a cofactor.

The enzyme catalyses (2-aminoethyl)phosphonate + CTP = CMP-(2-aminoethyl)phosphonate + diphosphate. Its pathway is phosphorus metabolism; phosphonate biosynthesis. Its function is as follows. Cytidylyltransferase involved in the biosynthesis of cell-surface phosphonates. Catalyzes the activation of 2-aminoethylphosphonate (AEP) to CMP-2-aminoethylphosphonate (CMP-AEP). Can also use phosphocholine, with much lower efficiency. Exhibits strong activity towards CTP, limited activity towards ATP and no activity with GTP. This Lancefieldella rimae (strain ATCC 49626 / DSM 7090 / CCUG 31168 / NBRC 15546 / VPI D140H-11A) (Atopobium rimae) protein is 2-aminoethylphosphonate cytidylyltransferase.